Consider the following 716-residue polypeptide: Probable basic-leucine zipper transcription factor O (716 aa).

Residues leucine 20–aspartate 142 adopt a coiled-coil conformation. Residues serine 173–asparagine 233 are disordered. A bZIP domain is found at lysine 381–aspartate 444. The tract at residues lysine 387–lysine 403 is basic motif. The leucine-zipper stretch occupies residues isoleucine 406 to leucine 413.

It belongs to the bZIP family.

Its subcellular location is the nucleus. Functionally, probable transcriptional regulator. This chain is Probable basic-leucine zipper transcription factor O (bzpO), found in Dictyostelium discoideum (Social amoeba).